Consider the following 343-residue polypeptide: MRALAKLAPEEGLTLVDRPVPEPGPGEILVRVEAASICGTDLHIWKWDAWARGRIRPPLVTGHEFSGVVEAVGPGVRRPQVGDHVSLESHIVCHACPACRTGNYHVCLNTQILGVDRDGGFAEYVVVPAENAWVNPKDLPFEVAAILEPFGNAVHTVYAGSGVSGKSVLITGAGPIGLMAAMVVRASGAGPILVSDPNPYRLAFARPYADRLVNPLEEDLLEVVRRVTGSGVEVLLEFSGNEAAIHQGLMALIPGGEARILGIPSDPIRFDLAGELVMRGITAFGIAGRRLWQTWMQGTALVYSGRVDLSPLLTHRLPLSRYREAFGLLASGQAVKVILDPKA.

Cysteine 38 serves as a coordination point for Zn(2+). Catalysis depends on charge relay system residues threonine 40 and histidine 43. 6 residues coordinate Zn(2+): histidine 63, glutamate 64, cysteine 93, cysteine 96, cysteine 99, and cysteine 107. Residues isoleucine 176, aspartate 196, arginine 201, 261–263 (LGI), and 286–288 (IAG) each bind NAD(+).

The protein belongs to the zinc-containing alcohol dehydrogenase family. Homotetramer. Zn(2+) is required as a cofactor.

Its subcellular location is the cytoplasm. It carries out the reaction L-threonine + NAD(+) = (2S)-2-amino-3-oxobutanoate + NADH + H(+). It functions in the pathway amino-acid degradation; L-threonine degradation via oxydo-reductase pathway; glycine from L-threonine: step 1/2. Functionally, catalyzes the NAD(+)-dependent oxidation of L-threonine to 2-amino-3-ketobutyrate. The protein is L-threonine 3-dehydrogenase of Thermus thermophilus (strain ATCC 27634 / DSM 579 / HB8).